Here is a 516-residue protein sequence, read N- to C-terminus: H/ACA ribonucleoprotein complex subunit DKC1 (516 aa).

The segment at 1–24 (MADGDGSSVKKRRKKDKRSLPDED) is disordered. Asp123 (nucleophile) is an active-site residue. The PUA domain occupies 294–369 (HKRLVMKDSA…VVAKIKRVIM (76 aa)). A disordered region spans residues 422–516 (KKEAAKVPQA…KQKEVEESSE (95 aa)). Positions 434–446 (EVERAPKRKRESE) are enriched in basic and acidic residues. A compositionally biased stretch (pro residues) spans 453 to 464 (SPPPSPATPPPE). A coiled-coil region spans residues 463 to 516 (PEELSKKEKKKKKKEKKAKEAAESGEEQVEVISESSAKKKKKKKKQKEVEESSE). Basic residues predominate over residues 469–478 (KEKKKKKKEK).

This sequence belongs to the pseudouridine synthase TruB family. As to quaternary structure, part of the H/ACA small nucleolar ribonucleoprotein (H/ACA snoRNP) complex, which contains NHP2/NOLA2, GAR1/NOLA1, NOP10/NOLA3, and DKC1/NOLA4, which is presumed to be the catalytic subunit. The complex contains a stable core formed by binding of one or two NOP10-DKC1 heterodimers to NHP2; GAR1 subsequently binds to this core via DKC1. The complex binds a box H/ACA small nucleolar RNA (snoRNA), which may target the specific site of modification within the RNA substrate.

Its subcellular location is the nucleus. It is found in the nucleolus. The protein localises to the cajal body. It catalyses the reaction uridine in 5S rRNA = pseudouridine in 5S rRNA. In terms of biological role, catalytic subunit of H/ACA small nucleolar ribonucleoprotein (H/ACA snoRNP) complex, which catalyzes pseudouridylation of rRNA. This involves the isomerization of uridine such that the ribose is subsequently attached to C5, instead of the normal N1. Each rRNA can contain up to 100 pseudouridine ('psi') residues, which may serve to stabilize the conformation of rRNAs. Required for ribosome biogenesis and telomere maintenance. This chain is H/ACA ribonucleoprotein complex subunit DKC1 (DKC1), found in Gallus gallus (Chicken).